The following is a 218-amino-acid chain: N-(5'-phosphoribosyl)anthranilate isomerase (218 aa).

This sequence belongs to the TrpF family.

It carries out the reaction N-(5-phospho-beta-D-ribosyl)anthranilate = 1-(2-carboxyphenylamino)-1-deoxy-D-ribulose 5-phosphate. It functions in the pathway amino-acid biosynthesis; L-tryptophan biosynthesis; L-tryptophan from chorismate: step 3/5. This is N-(5'-phosphoribosyl)anthranilate isomerase from Desulfatibacillum aliphaticivorans.